We begin with the raw amino-acid sequence, 507 residues long: GMP synthase [glutamine-hydrolyzing] (507 aa).

In terms of domain architecture, Glutamine amidotransferase type-1 spans 4–193; sequence KIIILDFGSQ…VVDVCGCKQD (190 aa). Residue cysteine 79 is the Nucleophile of the active site. Catalysis depends on residues histidine 167 and glutamate 169. The GMPS ATP-PPase domain maps to 194–382; the sequence is WSPASFIEST…LGMPEHLITR (189 aa). 221–227 contributes to the ATP binding site; it reads SGGVDSS.

As to quaternary structure, homodimer.

It carries out the reaction XMP + L-glutamine + ATP + H2O = GMP + L-glutamate + AMP + diphosphate + 2 H(+). It functions in the pathway purine metabolism; GMP biosynthesis; GMP from XMP (L-Gln route): step 1/1. Functionally, catalyzes the synthesis of GMP from XMP. This chain is GMP synthase [glutamine-hydrolyzing], found in Bacteroides fragilis (strain ATCC 25285 / DSM 2151 / CCUG 4856 / JCM 11019 / LMG 10263 / NCTC 9343 / Onslow / VPI 2553 / EN-2).